The primary structure comprises 794 residues: Protein SPA1-RELATED 4 (794 aa).

The Protein kinase domain occupies 1 to 268; the sequence is MKGSSESSSR…MSELLQSEFI (268 aa). The segment at 126-165 is disordered; that stretch reads SCSDSGSDEDATTKSREIGSSRQEEILSERRSKQQEEVKK. Residues 136-165 show a composition bias toward basic and acidic residues; it reads ATTKSREIGSSRQEEILSERRSKQQEEVKK. Positions 272–326 form a coiled coil; it reads RENLEEREAAMELRDRIEEQELLLEFLFLIQQRKQEAADKLQDTISLLSSDIDQV. Disordered stretches follow at residues 352–373 and 428–447; these read QGAETTAAEEENDDNSIDEESK and GRSSEKSSMSQPSKDPINDS. A compositionally biased stretch (acidic residues) spans 358–369; sequence AAEEENDDNSID. WD repeat units lie at residues 482 to 521, 531 to 571, 574 to 614, 616 to 656, 660 to 698, 707 to 746, and 762 to 794; these read NSSNLVCAIGFDRDGEFFATAGVNKKIKIFECESIIKDGR, ASRS…LVTE, EHEK…SIGT, KTKA…LPLC, GHHKTVSYVRFVDSSTLVSSSTDNTLKLWDLSMSISGIN, GHTNVKNFVGLSVSDGYIATGSETNEVFVYHKAFPMPVLS, and DASQFISSVCWRGQSSTLVAANSTGNIKILEMV. Positions 635 to 649 match the DWD box motif; the sequence is AFGSADHKVYYYDLR.

As to quaternary structure, interacts with COP1 and CO. Binds to CRY1 in response to blue light, this interaction prevents SPA1/COP1 complex formation and thus avoid COP1-dependent degradation of the transcription factor HY5 by the proteasome and promotes hypocotyl elongation.

It localises to the nucleus. Functionally, repressor of photomorphogenesis in the light. Probably part of the COP1/SPA E3 ubiquitin-protein ligase complex. In Arabidopsis thaliana (Mouse-ear cress), this protein is Protein SPA1-RELATED 4 (SPA4).